The chain runs to 198 residues: Recombination protein RecR (198 aa).

Residues 58-73 (CSVCGNFTDTDPCAIC) form a C4-type zinc finger. The 95-residue stretch at 81–175 (DIICVVEQPK…KVTRIAAGIP (95 aa)) folds into the Toprim domain.

Belongs to the RecR family.

May play a role in DNA repair. It seems to be involved in an RecBC-independent recombinational process of DNA repair. It may act with RecF and RecO. This chain is Recombination protein RecR, found in Clostridium perfringens (strain ATCC 13124 / DSM 756 / JCM 1290 / NCIMB 6125 / NCTC 8237 / Type A).